Consider the following 411-residue polypeptide: Corticotropin-releasing factor receptor 2 (411 aa).

Residues Met1–Ala19 constitute a signal peptide (not cleaved). The Extracellular segment spans residues Met1–Lys108. Asn13, Asn41, Asn74, Asn86, and Asn94 each carry an N-linked (GlcNAc...) asparagine glycan. 3 disulfide bridges follow: Cys14–Cys50, Cys40–Cys83, and Cys64–Cys98. The helical transmembrane segment at Tyr109 to Leu139 threads the bilayer. Topologically, residues Val140 to Cys146 are cytoplasmic. Residues Leu147–Leu171 traverse the membrane as a helical segment. The Extracellular segment spans residues Ile172–Arg185. Cys184 and Cys254 form a disulfide bridge. The helical transmembrane segment at Cys186 to Val214 threads the bilayer. Residues Met215–His221 lie on the Cytoplasmic side of the membrane. The helical transmembrane segment at Leu222–Tyr249 threads the bilayer. Over Glu250–Asp265 the chain is Extracellular. A helical transmembrane segment spans residues Tyr266 to Met291. Residues Thr292 to Thr302 are Cytoplasmic-facing. A helical transmembrane segment spans residues Ile303 to Phe327. Over Val328–Asp334 the chain is Extracellular. A helical transmembrane segment spans residues Leu335–Gly364. Residues Glu365 to Val411 lie on the Cytoplasmic side of the membrane.

Belongs to the G-protein coupled receptor 2 family. In terms of assembly, monomer. Interacts with CRF, UCN, UCN2 and UCN3. In terms of processing, a N-glycosylation site within the signal peptide impedes its proper cleavage and function. Highly expressed in the heart. Also expressed in lungs, skeletal muscle, gastrointestinal tract, epididymis, and brain.

It localises to the cell membrane. In terms of biological role, G-protein coupled receptor for CRH (corticotropin-releasing factor), UCN (urocortin), UCN2 and UCN3. Has high affinity for UCN. Ligand binding causes a conformation change that triggers signaling via guanine nucleotide-binding proteins (G proteins) and down-stream effectors, such as adenylate cyclase. Promotes the activation of adenylate cyclase, leading to increased intracellular cAMP levels. The protein is Corticotropin-releasing factor receptor 2 (Crhr2) of Mus musculus (Mouse).